A 98-amino-acid polypeptide reads, in one-letter code: NADH-ubiquinone oxidoreductase chain 4L (98 aa).

The next 3 membrane-spanning stretches (helical) occupy residues 1 to 21 (MSLVYMNIMTAFAVSLTGLLM), 29 to 49 (SLLCLEGMMLSLFVMATLMIL), and 61 to 81 (IILLVFAACEAALGLSLLVMV).

Belongs to the complex I subunit 4L family. Core subunit of respiratory chain NADH dehydrogenase (Complex I) which is composed of 45 different subunits.

It is found in the mitochondrion inner membrane. It carries out the reaction a ubiquinone + NADH + 5 H(+)(in) = a ubiquinol + NAD(+) + 4 H(+)(out). Its function is as follows. Core subunit of the mitochondrial membrane respiratory chain NADH dehydrogenase (Complex I) which catalyzes electron transfer from NADH through the respiratory chain, using ubiquinone as an electron acceptor. Part of the enzyme membrane arm which is embedded in the lipid bilayer and involved in proton translocation. This Pantholops hodgsonii (Chiru) protein is NADH-ubiquinone oxidoreductase chain 4L (MT-ND4L).